The chain runs to 229 residues: Thiamine import ATP-binding protein ThiQ (229 aa).

The region spanning 2–229 (LHLENIRVRQ…NNAEPLRPWM (228 aa)) is the ABC transporter domain. 32 to 39 (GASGSGKS) is an ATP binding site.

The protein belongs to the ABC transporter superfamily. Thiamine importer (TC 3.A.1.19.1) family. As to quaternary structure, the complex is composed of two ATP-binding proteins (ThiQ), two transmembrane proteins (ThiP) and a solute-binding protein (ThiB).

It localises to the cell inner membrane. It catalyses the reaction thiamine(out) + ATP + H2O = thiamine(in) + ADP + phosphate + H(+). Its function is as follows. Part of the ABC transporter complex ThiBPQ involved in thiamine import. Responsible for energy coupling to the transport system. In Jannaschia sp. (strain CCS1), this protein is Thiamine import ATP-binding protein ThiQ.